A 495-amino-acid chain; its full sequence is Bifunctional protein GlmU (495 aa).

A pyrophosphorylase region spans residues 1-241; sequence MTFPGDTAVL…SALVAGVNNR (241 aa). UDP-N-acetyl-alpha-D-glucosamine contacts are provided by residues 12–15, lysine 26, glutamine 83, 88–89, 112–114, glycine 151, glutamate 166, asparagine 181, and asparagine 239; these read LAAG, GT, and SGD. Aspartate 114 serves as a coordination point for Mg(2+). Mg(2+) is bound at residue asparagine 239. The tract at residues 242–262 is linker; that stretch reads VQLAQLASELNRRVVAAHQLA. An N-acetyltransferase region spans residues 263 to 495; the sequence is GVTVVDPATT…TQPPDADQTP (233 aa). Positions 344 and 362 each coordinate UDP-N-acetyl-alpha-D-glucosamine. Residue histidine 374 is the Proton acceptor of the active site. Tyrosine 377 and asparagine 388 together coordinate UDP-N-acetyl-alpha-D-glucosamine. Acetyl-CoA-binding positions include alanine 391, 397 to 398, serine 416, and alanine 434; that span reads NY. A disordered region spans residues 457–495; that stretch reads IENWVQRKRPGSPAAQASKRASEMACQQPTQPPDADQTP. The span at 483–495 shows a compositional bias: low complexity; the sequence is QQPTQPPDADQTP.

It in the N-terminal section; belongs to the N-acetylglucosamine-1-phosphate uridyltransferase family. In the C-terminal section; belongs to the transferase hexapeptide repeat family. In terms of assembly, homotrimer. The cofactor is Mg(2+).

The protein localises to the cytoplasm. It catalyses the reaction alpha-D-glucosamine 1-phosphate + acetyl-CoA = N-acetyl-alpha-D-glucosamine 1-phosphate + CoA + H(+). The enzyme catalyses N-acetyl-alpha-D-glucosamine 1-phosphate + UTP + H(+) = UDP-N-acetyl-alpha-D-glucosamine + diphosphate. It functions in the pathway nucleotide-sugar biosynthesis; UDP-N-acetyl-alpha-D-glucosamine biosynthesis; N-acetyl-alpha-D-glucosamine 1-phosphate from alpha-D-glucosamine 6-phosphate (route II): step 2/2. Its pathway is nucleotide-sugar biosynthesis; UDP-N-acetyl-alpha-D-glucosamine biosynthesis; UDP-N-acetyl-alpha-D-glucosamine from N-acetyl-alpha-D-glucosamine 1-phosphate: step 1/1. The protein operates within bacterial outer membrane biogenesis; LPS lipid A biosynthesis. Catalyzes the last two sequential reactions in the de novo biosynthetic pathway for UDP-N-acetylglucosamine (UDP-GlcNAc). The C-terminal domain catalyzes the transfer of acetyl group from acetyl coenzyme A to glucosamine-1-phosphate (GlcN-1-P) to produce N-acetylglucosamine-1-phosphate (GlcNAc-1-P), which is converted into UDP-GlcNAc by the transfer of uridine 5-monophosphate (from uridine 5-triphosphate), a reaction catalyzed by the N-terminal domain. This Mycobacterium bovis (strain ATCC BAA-935 / AF2122/97) protein is Bifunctional protein GlmU.